Consider the following 179-residue polypeptide: Large ribosomal subunit protein uL6 (179 aa).

The protein belongs to the universal ribosomal protein uL6 family. Part of the 50S ribosomal subunit.

Functionally, this protein binds to the 23S rRNA, and is important in its secondary structure. It is located near the subunit interface in the base of the L7/L12 stalk, and near the tRNA binding site of the peptidyltransferase center. The sequence is that of Large ribosomal subunit protein uL6 from Mycolicibacterium gilvum (strain PYR-GCK) (Mycobacterium gilvum (strain PYR-GCK)).